The chain runs to 394 residues: Elongation factor Tu 1 (394 aa).

The 195-residue stretch at 10-204 (KPHVNVGTIG…ALDNYIPEPE (195 aa)) folds into the tr-type G domain. The segment at 19 to 26 (GHVDHGKT) is G1. A GTP-binding site is contributed by 19–26 (GHVDHGKT). Position 26 (Thr-26) interacts with Mg(2+). Residues 60 to 64 (GITIS) form a G2 region. The interval 81 to 84 (DCPG) is G3. GTP is bound by residues 81-85 (DCPGH) and 136-139 (NKCD). Residues 136 to 139 (NKCD) are G4. Residues 174-176 (SAL) are G5.

The protein belongs to the TRAFAC class translation factor GTPase superfamily. Classic translation factor GTPase family. EF-Tu/EF-1A subfamily. As to quaternary structure, monomer.

It localises to the cytoplasm. It catalyses the reaction GTP + H2O = GDP + phosphate + H(+). GTP hydrolase that promotes the GTP-dependent binding of aminoacyl-tRNA to the A-site of ribosomes during protein biosynthesis. The sequence is that of Elongation factor Tu 1 from Photobacterium profundum (strain SS9).